The sequence spans 122 residues: Large ribosomal subunit protein bL12 (122 aa).

The protein belongs to the bacterial ribosomal protein bL12 family. Homodimer. Part of the ribosomal stalk of the 50S ribosomal subunit. Forms a multimeric L10(L12)X complex, where L10 forms an elongated spine to which 2 to 4 L12 dimers bind in a sequential fashion. Binds GTP-bound translation factors.

Functionally, forms part of the ribosomal stalk which helps the ribosome interact with GTP-bound translation factors. Is thus essential for accurate translation. This is Large ribosomal subunit protein bL12 from Streptococcus pneumoniae serotype 19F (strain G54).